A 142-amino-acid polypeptide reads, in one-letter code: Large ribosomal subunit protein bL17 (142 aa).

It belongs to the bacterial ribosomal protein bL17 family. In terms of assembly, part of the 50S ribosomal subunit. Contacts protein L32.

This is Large ribosomal subunit protein bL17 from Chlamydia abortus (strain DSM 27085 / S26/3) (Chlamydophila abortus).